The primary structure comprises 85 residues: Toxin To6 (85 aa).

An N-terminal signal peptide occupies residues 1-20 (MSIFPIILALLLIGLDEGEA). Positions 21–83 (LDGYPLSKNN…EMYPGRLPCN (63 aa)) constitute an LCN-type CS-alpha/beta domain. 4 cysteine pairs are disulfide-bonded: cysteine 32-cysteine 82, cysteine 36-cysteine 59, cysteine 42-cysteine 64, and cysteine 46-cysteine 66.

Expressed by the venom gland.

Its subcellular location is the secreted. Functionally, beta toxins bind voltage-independently at site-4 of sodium channels (Nav) and shift the voltage of activation toward more negative potentials thereby affecting sodium channel activation and promoting spontaneous and repetitive firing. The protein is Toxin To6 of Tityus obscurus (Amazonian scorpion).